Consider the following 270-residue polypeptide: Esterase (270 aa).

Residues Ser127, Asp216, and His244 each act as charge relay system in the active site.

It belongs to the LovG family.

Its pathway is mycotoxin biosynthesis. Esterase; part of the gene cluster that mediates the biosynthesis of the selective antifungal agent ascochitine, an o-quinone methide that plays a possible protective role against other microbial competitors in nature and is considered to be important for pathogenicity of legume-associated Didymella species. The pathway probably begins with the synthesis of a keto-aldehyde intermediate by the ascochitine non-reducing polyketide synthase pksAC from successive condensations of 4 malonyl-CoA units, presumably with a simple acetyl-CoA starter unit. Release of the keto-aldehyde intermediate is consistent with the presence of the C-terminal reductive release domain. The HR-PKS (orf7) probably makes a diketide starter unit which is passed to the non-reducing polyketide synthase pksAC for further extension, producing ascochital and ascochitine. The aldehyde dehydrogenase (orf1), the 2-oxoglutarate-dependent dioxygenase (orf3) and the dehydrogenase (orf9) are probably involved in subsequent oxidations of methyl groups to the carboxylic acid of the heterocyclic ring. The ascochitine gene cluster also includes a gene encoding a short peptide with a cupin domain (orf2) that is often found in secondary metabolite gene clusters and which function has still to be determined. This is Esterase from Didymella fabae (Leaf and pod spot disease fungus).